Consider the following 944-residue polypeptide: Nonsense-mediated mRNA decay factor SMG8 (944 aa).

Disordered regions lie at residues 559 to 601 and 629 to 654; these read LNNG…SNCC and ASSE…TDNE. The segment covering 568-589 has biased composition (acidic residues); that stretch reads QDEDAEEDEAEEEEGQEQEQPT. Residues 629–640 show a composition bias toward polar residues; that stretch reads ASSEQLLNSEQN. Residues 641 to 650 show a composition bias toward low complexity; that stretch reads TTSSGTSSAD.

Belongs to the SMG8 family.

Its function is as follows. Involved in nonsense-mediated decay (NMD) of mRNAs containing premature stop codons. Probable component of kinase complex containing nonC and recruited to stalled ribosomes. The chain is Nonsense-mediated mRNA decay factor SMG8 from Drosophila melanogaster (Fruit fly).